A 304-amino-acid chain; its full sequence is UDP-N-acetylenolpyruvoylglucosamine reductase (304 aa).

The 166-residue stretch at 33–198 (RVGGPVDILL…ITATFCFESG (166 aa)) folds into the FAD-binding PCMH-type domain. Arginine 177 is a catalytic residue. Serine 227 serves as the catalytic Proton donor. The active site involves glutamate 297.

It belongs to the MurB family. Requires FAD as cofactor.

It is found in the cytoplasm. The catalysed reaction is UDP-N-acetyl-alpha-D-muramate + NADP(+) = UDP-N-acetyl-3-O-(1-carboxyvinyl)-alpha-D-glucosamine + NADPH + H(+). It participates in cell wall biogenesis; peptidoglycan biosynthesis. Functionally, cell wall formation. The chain is UDP-N-acetylenolpyruvoylglucosamine reductase from Clostridium botulinum (strain Eklund 17B / Type B).